Reading from the N-terminus, the 1934-residue chain is Tudor domain-containing protein 15 (1934 aa).

6 Tudor domains span residues 59 to 117 (NVEI…LFEL), 289 to 347 (CDNF…FILV), 531 to 589 (KPEP…FCEL), 799 to 856 (PYEI…FLLL), 1011 to 1070 (DSNK…FPEL), and 1342 to 1401 (KPLV…FLTV). Positions 1490–1510 (VRPGDNEMKKGKSNESEGSMN) are disordered. Residues 1491 to 1504 (RPGDNEMKKGKSNE) show a composition bias toward basic and acidic residues. 2 Tudor domains span residues 1574-1633 (SIEK…IRNI) and 1780-1838 (FIIP…PEEL).

The chain is Tudor domain-containing protein 15 (TDRD15) from Homo sapiens (Human).